Reading from the N-terminus, the 227-residue chain is Cytosolic-abundant heat soluble protein 106094 (227 aa).

A disordered region spans residues M1–K28. The stretch at V90–Q140 forms a coiled coil. 2 CAHS motif regions span residues Y122–Q140 and Q159–E177. A disordered region spans residues L198–R227. Over residues K217 to R227 the composition is skewed to basic and acidic residues.

Belongs to the Cytosolic-abundant heat soluble protein (CAHS) family.

It localises to the cytoplasm. Functionally, CAHS proteins are cytosolic heat soluble proteins that seem to contribute to the anhydrobiosis in tardigrades, but their specific mechanisms are yet to be identified. It is possible that protection during anhydrobiosis might occur via the stabilization of vitrifying small molecules such as sugars, but not via the direct glass transition of CAHS proteins themselves. The protein is Cytosolic-abundant heat soluble protein 106094 of Paramacrobiotus richtersi (Water bear).